Reading from the N-terminus, the 88-residue chain is Hemotin (88 aa).

Over 1–14 (MDCFKVFEVVFQSE) the chain is Lumenal. The chain crosses the membrane as a helical span at residues 15–37 (INPLLLIPAVATIALTLCCYCYH). The Cytoplasmic segment spans residues 38–88 (GYQWIRDRRTARIEEQQAQLPLPLSRISITPGCSMVATTKLTHSRNSVDIY).

As to quaternary structure, interacts with 14-3-3zeta. In terms of tissue distribution, expressed in hemocytes.

It localises to the early endosome membrane. Functionally, negatively regulates early endosome maturation by binding to and repressing the activity of 14-3-3zeta which prevents the 14-3-3zeta-mediated activation of phosphoinositide 3-kinase Pi3K68D. This, in turn, inhibits the Pi3K68D-mediated conversion of phosphatidylinositol to phosphatidylinositol-3-phosphate and prevents progression of early endosomes through the maturation process which regulates subsequent steps of phagocytic processing. This is Hemotin from Drosophila melanogaster (Fruit fly).